A 579-amino-acid chain; its full sequence is MFS-type transporter ppz2 (579 aa).

The disordered stretch occupies residues 1-23; the sequence is MQTATALEDSANAPSPAASSQGQ. Over residues 10-20 the composition is skewed to low complexity; that stretch reads SANAPSPAASS. An N-linked (GlcNAc...) asparagine glycan is attached at N38. 14 consecutive transmembrane segments (helical) span residues 48-68, 83-103, 121-141, 145-165, 171-191, 203-223, 236-256, 269-289, 298-318, 336-356, 374-394, 403-423, 438-460, and 516-536; these read ALIMVALCCAVFLHALDNTII, AAYTWIGSTYLLAVAASTMVW, LCFFTGSLIAALSANFAMLIA, IQGIGGAGVNVLANICVGDLF, GLYYGVIGGVWAVALSLGPVV, WCFYINLPLCAVVFVIIILLL, IAAIDWVGAALSIGSTLMILL, SATVICLVVFGFIGWILCFSW, LLPVSIFKQIPTLAVLAACFI, AVLGATPILSGVYLLPTAVSI, LTPIYIGFVLQTLGYGLFIDL, IIVFQIIGGLGVGFNFQAPMV, TSAYNFMRNVSGAISVVIGQTVF, and SMWIMYTAFSAAALVVCPFLG.

Belongs to the major facilitator superfamily. TCR/Tet family.

The protein localises to the membrane. In terms of biological role, MFS-type transporter; part of the gene cluster that mediates the biosynthesis of pyrrolopyrazines, secondary metabolites showing insecticidal activity. Probably involved in the secretion of peramine and other pyrrolopyrazines. This Metarhizium majus (strain ARSEF 297) protein is MFS-type transporter ppz2.